The chain runs to 553 residues: Glucagon-like peptide 2 receptor (553 aa).

The Extracellular segment spans residues 1–173; sequence MKLGSSRAGP…SFKQNVDRYA (173 aa). Disulfide bonds link cysteine 83-cysteine 105, cysteine 96-cysteine 137, and cysteine 118-cysteine 159. 4 N-linked (GlcNAc...) asparagine glycosylation sites follow: asparagine 97, asparagine 113, asparagine 148, and asparagine 162. Residues 174–198 traverse the membrane as a helical segment; it reads LLSTLQLMYTVGYSFSLISLFLALT. Over 199-210 the chain is Cytoplasmic; that stretch reads LLLFLRKLHCTR. Residues 211 to 235 form a helical membrane-spanning segment; it reads NYIHMNLFASFILRTLAVLVKDVVF. Residues 236–261 lie on the Extracellular side of the membrane; that stretch reads YNSYSKRPDNENGWMSYLSEMSTSCR. The chain crosses the membrane as a helical span at residues 262–285; sequence SVQVLLHYFVGANYLWLLVEGLYL. The Cytoplasmic portion of the chain corresponds to 286–299; sequence HTLLEPTVLPERRL. A helical membrane pass occupies residues 300–321; the sequence is WPRYLLLGWAFPVLFVVPWGFA. The Extracellular portion of the chain corresponds to 322-339; sequence RAHLENTGCWTTNGNKKI. Residues 340-362 traverse the membrane as a helical segment; it reads WWIIRGPMMLCVTVNFFIFLKIL. Residues 363-386 lie on the Cytoplasmic side of the membrane; that stretch reads KLLISKLKAHQMCFRDYKYRLAKS. A helical membrane pass occupies residues 387–405; the sequence is TLVLIPLLGVHEILFSFIT. The Extracellular segment spans residues 406-417; it reads DDQVEGFAKLIR. Residues 418–438 traverse the membrane as a helical segment; that stretch reads LFIQLTLSSFHGFLVALQYGF. Residues 439-550 are Cytoplasmic-facing; the sequence is ANGEVKAELR…ANTMEEILEE (112 aa).

It belongs to the G-protein coupled receptor 2 family.

Its subcellular location is the cell membrane. Its function is as follows. This is a receptor for glucagon-like peptide 2. The activity of this receptor is mediated by G proteins which activate adenylyl cyclase. The protein is Glucagon-like peptide 2 receptor (GLP2R) of Homo sapiens (Human).